Here is a 77-residue protein sequence, read N- to C-terminus: Dermatoxin-B1 (77 aa).

The N-terminal stretch at M1–C22 is a signal peptide. Residues E23–E42 constitute a propeptide that is removed on maturation. Residues S24–S45 are disordered. Residues E30–S40 show a composition bias toward acidic residues. Residue Q76 is modified to Glutamine amide.

It belongs to the frog skin active peptide (FSAP) family. Dermatoxin subfamily. Highest expression in skin and to a lesser extent in brain and intestine.

The protein localises to the secreted. The protein resides in the target cell membrane. Possesses a potent antimicrobial activity against Gram-positive bacteria B.megaterium, C.glutamicum and S.aureus and mollicutes A.laidlawii and S.melliferum. Less active against Gram-negative bacteria B.cepacia, P.aeruginosa, S.typhimurium and S.meliloti. Probably acts by disturbing membrane functions with its amphipathic structure. The protein is Dermatoxin-B1 of Phyllomedusa bicolor (Two-colored leaf frog).